We begin with the raw amino-acid sequence, 300 residues long: MEKTKEKAERILLEPYRYLLQLPGKQVRSKLSQAFNHWLKVPEDKLQIIIEVTEMLHNASLLIDDIEDSSKLRRGFPVAHSIYGVPSVINSANYVYFLGLEKVLTLDHPDAVKLFTRQLLELHQGQGLDIYWRDTYTCPTEEEYKAMVLQKTGGLFGLAVGLMQLFSDYKEDLKPLLDTLGLFFQIRDDYANLHSKEYSENKSFCEDLTEGKFSFPTIHAIWSRPESTQVQNILRQRTENIDIKKYCVQYLEDVGSFAYTRHTLRELEAKAYKQIEACGGNPSLVALVKHLSKMFTEENK.

Met1 bears the N-acetylmethionine mark. Isopentenyl diphosphate contacts are provided by Lys25, Arg28, and His57. Mg(2+)-binding residues include Asp64 and Asp68. Arg73 contacts dimethylallyl diphosphate. Arg74 contributes to the isopentenyl diphosphate binding site. Positions 151, 152, 185, 202, and 212 each coordinate dimethylallyl diphosphate.

The protein belongs to the FPP/GGPP synthase family. Homohexamer; trimer of homodimers. It depends on Mg(2+) as a cofactor.

It is found in the cytoplasm. The protein localises to the perinuclear region. It localises to the myofibril. Its subcellular location is the sarcomere. The protein resides in the z line. It catalyses the reaction isopentenyl diphosphate + dimethylallyl diphosphate = (2E)-geranyl diphosphate + diphosphate. It carries out the reaction isopentenyl diphosphate + (2E)-geranyl diphosphate = (2E,6E)-farnesyl diphosphate + diphosphate. The catalysed reaction is isopentenyl diphosphate + (2E,6E)-farnesyl diphosphate = (2E,6E,10E)-geranylgeranyl diphosphate + diphosphate. Its pathway is isoprenoid biosynthesis; farnesyl diphosphate biosynthesis; farnesyl diphosphate from geranyl diphosphate and isopentenyl diphosphate: step 1/1. It functions in the pathway isoprenoid biosynthesis; geranyl diphosphate biosynthesis; geranyl diphosphate from dimethylallyl diphosphate and isopentenyl diphosphate: step 1/1. It participates in isoprenoid biosynthesis; geranylgeranyl diphosphate biosynthesis; geranylgeranyl diphosphate from farnesyl diphosphate and isopentenyl diphosphate: step 1/1. Its function is as follows. Catalyzes the trans-addition of the three molecules of isopentenyl diphosphate (IPP) onto dimethylallyl pyrophosphate (DMAPP) to form geranylgeranyl pyrophosphate, an important precursor of carotenoids and geranylated proteins. This is Geranylgeranyl pyrophosphate synthase from Mus musculus (Mouse).